The sequence spans 360 residues: MLVYLAEYLTQFYSGFNVFSYVTFRAILGLLTALVFSLWWGPILIKHLQTLQIGQVVRDDGPESHFSKRGTPTMGGILILAGIFISVLLWGDLSNRYVLVTLFVLASFGVIGFIDDYRKVVKKDSKGLIARWKYALQSIAALVVAVYLYSSSTMVGETQLVVPFFKDIMPQLGFMFILLAYFTIVGASNAVNLTDGLDGLAIMPTVMVAAAFALIAYLSGHAQFASYLHLPHLPLAGELVIVCTAMVGAGLGFLWFNTYPAQVFMGDVGSLALGAALGVIAILVRQEILLVIMGGVFVMETVSVILQVGSYKLRGQRIFRMAPIHHHYELKGWPEPRVIVRFWIISLFLVLLGLATLKLR.

Transmembrane regions (helical) follow at residues alanine 26 to lysine 46, threonine 73 to leucine 93, tyrosine 97 to tyrosine 117, alanine 135 to valine 155, isoleucine 168 to serine 188, glycine 199 to serine 219, alanine 236 to phenylalanine 256, valine 263 to leucine 283, isoleucine 288 to valine 308, and valine 338 to lysine 358.

This sequence belongs to the glycosyltransferase 4 family. MraY subfamily. The cofactor is Mg(2+).

The protein localises to the cell inner membrane. The enzyme catalyses UDP-N-acetyl-alpha-D-muramoyl-L-alanyl-gamma-D-glutamyl-meso-2,6-diaminopimeloyl-D-alanyl-D-alanine + di-trans,octa-cis-undecaprenyl phosphate = di-trans,octa-cis-undecaprenyl diphospho-N-acetyl-alpha-D-muramoyl-L-alanyl-D-glutamyl-meso-2,6-diaminopimeloyl-D-alanyl-D-alanine + UMP. Its pathway is cell wall biogenesis; peptidoglycan biosynthesis. In terms of biological role, catalyzes the initial step of the lipid cycle reactions in the biosynthesis of the cell wall peptidoglycan: transfers peptidoglycan precursor phospho-MurNAc-pentapeptide from UDP-MurNAc-pentapeptide onto the lipid carrier undecaprenyl phosphate, yielding undecaprenyl-pyrophosphoryl-MurNAc-pentapeptide, known as lipid I. In Shewanella frigidimarina (strain NCIMB 400), this protein is Phospho-N-acetylmuramoyl-pentapeptide-transferase.